The primary structure comprises 387 residues: uncharacterized protein (387 aa).

The protein resides in the virion. This is an uncharacterized protein from Acanthamoeba polyphaga (Amoeba).